A 354-amino-acid polypeptide reads, in one-letter code: Histidinol-phosphate aminotransferase (354 aa).

The span at 1–11 (MKSFLSDKAKS) shows a compositional bias: basic and acidic residues. Residues 1-33 (MKSFLSDKAKSIEPYTPGEQPKDKNYIKLNTNE) are disordered. Lys211 carries the post-translational modification N6-(pyridoxal phosphate)lysine.

The protein belongs to the class-II pyridoxal-phosphate-dependent aminotransferase family. Histidinol-phosphate aminotransferase subfamily. In terms of assembly, homodimer. Requires pyridoxal 5'-phosphate as cofactor.

It catalyses the reaction L-histidinol phosphate + 2-oxoglutarate = 3-(imidazol-4-yl)-2-oxopropyl phosphate + L-glutamate. It functions in the pathway amino-acid biosynthesis; L-histidine biosynthesis; L-histidine from 5-phospho-alpha-D-ribose 1-diphosphate: step 7/9. The chain is Histidinol-phosphate aminotransferase from Brachyspira hyodysenteriae (strain ATCC 49526 / WA1).